Here is an 89-residue protein sequence, read N- to C-terminus: Small ribosomal subunit protein uS15 (89 aa).

This sequence belongs to the universal ribosomal protein uS15 family. As to quaternary structure, part of the 30S ribosomal subunit. Forms a bridge to the 50S subunit in the 70S ribosome, contacting the 23S rRNA.

One of the primary rRNA binding proteins, it binds directly to 16S rRNA where it helps nucleate assembly of the platform of the 30S subunit by binding and bridging several RNA helices of the 16S rRNA. Its function is as follows. Forms an intersubunit bridge (bridge B4) with the 23S rRNA of the 50S subunit in the ribosome. The chain is Small ribosomal subunit protein uS15 from Frankia casuarinae (strain DSM 45818 / CECT 9043 / HFP020203 / CcI3).